The primary structure comprises 603 residues: Geraniol synthase, chloroplastic (603 aa).

The N-terminal 35 residues, 1 to 35 (MSSISQKVVIGLNKAAANNNLQNLDRRGFKTRCVS), are a transit peptide targeting the chloroplast. (2E)-geranyl diphosphate contacts are provided by Arg319, Asp356, Asp360, Arg497, and Asp500. Asp356 and Asp360 together coordinate Mg(2+). The DDXXD motif motif lies at 356–360 (DDVYD). Asp500, Thr504, and Glu508 together coordinate Mg(2+).

This sequence belongs to the terpene synthase family. Tpsb subfamily. Monomer. Mg(2+) serves as cofactor. The cofactor is Mn(2+).

The protein resides in the plastid. The protein localises to the chloroplast. The catalysed reaction is (2E)-geranyl diphosphate + H2O = (2E)-geraniol + diphosphate. It participates in secondary metabolite biosynthesis; terpenoid biosynthesis. Functionally, monoterpene synthase (mono-TPS) involved in the biosynthesis of monoterpenes natural products. Catalyzes the conversion of (2E)-geranyl diphosphate (GPP) into geraniol. In Perilla frutescens var. hirtella (Perilla citriodora), this protein is Geraniol synthase, chloroplastic.